Here is a 225-residue protein sequence, read N- to C-terminus: Claudin-8 (225 aa).

Over 1 to 7 (MATYALQ) the chain is Cytoplasmic. The helical transmembrane segment at 8–28 (MAALVLGGVGMVGTVAVTIMP) threads the bilayer. The Extracellular portion of the chain corresponds to 29–81 (QWRVSAFIESNIVVFENRWEGLWMNCMRHANIRMQCKVYDSLLALSPDLQASR). Residues 82-102 (GLMCAASVLAFLAFMTAILGM) traverse the membrane as a helical segment. Residues 103-117 (KCTRCTGDDENVKSR) are Cytoplasmic-facing. Residues 118 to 138 (ILLTAGIIFFITGLVVLIPVS) form a helical membrane-spanning segment. At 139 to 166 (WVANSIIRDFYNPLVDVALKRELGEALY) the chain is on the extracellular side. Residues 167 to 187 (IGWTTALVLIAGGALFCCVFC) form a helical membrane-spanning segment. The Cytoplasmic segment spans residues 188 to 225 (CTERSNSYRYSVPSHRTTQRSFHAEKRSPSIYSKSQYV). Lys-213 participates in a covalent cross-link: Glycyl lysine isopeptide (Lys-Gly) (interchain with G-Cter in ubiquitin). Positions 224 to 225 (YV) are interactions with TJP1, TJP2 and TJP3.

Belongs to the claudin family. In terms of assembly, can form heteropolymeric strands with other claudins. Interacts with CLDN4. Directly interacts with TJP1/ZO-1, TJP2/ZO-2 and TJP3/ZO-3. Interacts with KLHL3. Post-translationally, ubiquitinated by the BCR(KLHL3) E3 ubiquitin ligase complex in the kidney, leading to its degradation. As to expression, expressed primarily in lung and kidney. Present in both cortical and medullar collecting ducts (at protein level).

It localises to the cell junction. The protein localises to the tight junction. The protein resides in the cell membrane. It carries out the reaction chloride(in) = chloride(out). It catalyses the reaction bromide(in) = bromide(out). The enzyme catalyses iodide(out) = iodide(in). The catalysed reaction is fluoride(in) = fluoride(out). Functionally, can associate with other claudins to regulate tight junction structural and functional strand dynamics. May coassemble with CLDN4 into tight junction strands containing anion-selective channels that convey paracellular chloride permeability in renal collecting ducts. Cannot form tight junction strands on its own. The sequence is that of Claudin-8 from Mus musculus (Mouse).